We begin with the raw amino-acid sequence, 150 residues long: Arginine repressor (150 aa).

It belongs to the ArgR family.

The protein resides in the cytoplasm. It functions in the pathway amino-acid biosynthesis; L-arginine biosynthesis [regulation]. In terms of biological role, regulates arginine biosynthesis genes. The chain is Arginine repressor from Clostridium botulinum (strain Okra / Type B1).